Here is a 127-residue protein sequence, read N- to C-terminus: Nuclear transport factor 2 (127 aa).

Residue Lys4 is modified to N6-acetyllysine. An NTF2 domain is found at 10 to 121; sequence IGSSFIQHYY…WVCTNDMFRL (112 aa).

As to quaternary structure, homodimer. Interacts with RAN (GDP-bound form); the interaction is direct and regulates RAN nuclear import. Interacts with the nucleoporins NUP54, NUP58 and NUP62 (via FG repeats); recruits NUTF2 to the nuclear pore complex a step required for NUTF2-mediated GDP-bound RAN nuclear import. Interacts with CAPG; mediates its nuclear import.

Its subcellular location is the cytoplasm. It is found in the cytosol. The protein resides in the nucleus outer membrane. It localises to the nucleus. The protein localises to the nuclear pore complex. Its subcellular location is the nucleus inner membrane. It is found in the nucleoplasm. Functionally, mediates the import of GDP-bound RAN from the cytoplasm into the nucleus which is essential for the function of RAN in cargo receptor-mediated nucleocytoplasmic transport. Thereby, plays indirectly a more general role in cargo receptor-mediated nucleocytoplasmic transport. Interacts with GDP-bound RAN in the cytosol, recruits it to the nuclear pore complex via its interaction with nucleoporins and promotes its nuclear import. The sequence is that of Nuclear transport factor 2 from Bos taurus (Bovine).